Here is a 529-residue protein sequence, read N- to C-terminus: Bifunctional purine biosynthesis protein PurH (529 aa).

The MGS-like domain maps to 1-148; it reads MQPPRPVRRA…KNHKDVAIVV (148 aa).

The protein belongs to the PurH family.

It catalyses the reaction (6R)-10-formyltetrahydrofolate + 5-amino-1-(5-phospho-beta-D-ribosyl)imidazole-4-carboxamide = 5-formamido-1-(5-phospho-D-ribosyl)imidazole-4-carboxamide + (6S)-5,6,7,8-tetrahydrofolate. The enzyme catalyses IMP + H2O = 5-formamido-1-(5-phospho-D-ribosyl)imidazole-4-carboxamide. It functions in the pathway purine metabolism; IMP biosynthesis via de novo pathway; 5-formamido-1-(5-phospho-D-ribosyl)imidazole-4-carboxamide from 5-amino-1-(5-phospho-D-ribosyl)imidazole-4-carboxamide (10-formyl THF route): step 1/1. The protein operates within purine metabolism; IMP biosynthesis via de novo pathway; IMP from 5-formamido-1-(5-phospho-D-ribosyl)imidazole-4-carboxamide: step 1/1. This is Bifunctional purine biosynthesis protein PurH from Sodalis glossinidius (strain morsitans).